The primary structure comprises 65 residues: Large ribosomal subunit protein bL35 (65 aa).

Residues 1 to 10 (MPKMKTDRGA) are compositionally biased toward basic and acidic residues. Positions 1–24 (MPKMKTDRGAAKRFKKTGSGGFKC) are disordered.

The protein belongs to the bacterial ribosomal protein bL35 family.

The chain is Large ribosomal subunit protein bL35 from Tolumonas auensis (strain DSM 9187 / NBRC 110442 / TA 4).